The primary structure comprises 208 residues: Cysteine-rich protein 2 (208 aa).

Residues 5-57 enclose the LIM zinc-binding 1 domain; it reads CPKCDKTVYFAEKVSSLGKDWHKFCLKCERCNKTLTPGGHAEHDGKPFCHKPC. N6-acetyllysine is present on Lys23. The residue at position 104 (Ser104) is a Phosphoserine. One can recognise an LIM zinc-binding 2 domain in the interval 126-178; the sequence is CPRCNKRVYFAEKVTSLGKDWHRPCLRCERCSKTLTPGGHAEHDGQPYCHKPC. 2 positions are modified to N6-acetyllysine: Lys138 and Lys144.

Interacts with TGFB1I1. As to expression, expressed more abundantly in liver and kidney of females than that of males. Equally expressed in brain, lung and heart.

The sequence is that of Cysteine-rich protein 2 (Crip2) from Rattus norvegicus (Rat).